The following is a 262-amino-acid chain: Putative protein-methionine-sulfoxide reductase subunit YedZ1 (262 aa).

It belongs to the MsrP family.

Part of the YedY1-YedZ1 system that may repair oxidized proteins containing methionine sulfoxide residues (Met-O). The chain is Putative protein-methionine-sulfoxide reductase subunit YedZ1 from Azospira oryzae (strain ATCC BAA-33 / DSM 13638 / PS) (Dechlorosoma suillum).